The following is a 166-amino-acid chain: Large ribosomal subunit protein uL10 (166 aa).

The protein belongs to the universal ribosomal protein uL10 family. In terms of assembly, part of the ribosomal stalk of the 50S ribosomal subunit. The N-terminus interacts with L11 and the large rRNA to form the base of the stalk. The C-terminus forms an elongated spine to which L12 dimers bind in a sequential fashion forming a multimeric L10(L12)X complex.

Its function is as follows. Forms part of the ribosomal stalk, playing a central role in the interaction of the ribosome with GTP-bound translation factors. The sequence is that of Large ribosomal subunit protein uL10 from Phytoplasma australiense.